Here is a 303-residue protein sequence, read N- to C-terminus: Protoheme IX farnesyltransferase (303 aa).

Transmembrane regions (helical) follow at residues 25–45 (MGLV…AIVM), 54–74 (IPQI…ACAL), 118–138 (CLFL…VGYV), 166–186 (IGWV…FLVV), 230–250 (LVLL…FVVI), and 280–300 (FVYS…VSLI).

The protein belongs to the UbiA prenyltransferase family. Protoheme IX farnesyltransferase subfamily. As to quaternary structure, interacts with CtaA.

It localises to the cell membrane. The catalysed reaction is heme b + (2E,6E)-farnesyl diphosphate + H2O = Fe(II)-heme o + diphosphate. It participates in porphyrin-containing compound metabolism; heme O biosynthesis; heme O from protoheme: step 1/1. Functionally, converts heme B (protoheme IX) to heme O by substitution of the vinyl group on carbon 2 of heme B porphyrin ring with a hydroxyethyl farnesyl side group. This is Protoheme IX farnesyltransferase from Staphylococcus epidermidis (strain ATCC 35984 / DSM 28319 / BCRC 17069 / CCUG 31568 / BM 3577 / RP62A).